Reading from the N-terminus, the 1399-residue chain is FYVE, RhoGEF and PH domain-containing protein 6 (1399 aa).

Disordered stretches follow at residues 1–99 (MTSA…KDVR), 138–164 (MKEN…SEKC), 185–210 (LTQQ…NGDH), 235–281 (AHHN…DGIS), 299–341 (YTSK…NGSS), and 367–479 (PVDE…KKPQ). Residues 50–60 (PAIAPKPKVPT) show a composition bias toward low complexity. Basic and acidic residues predominate over residues 259-276 (AESRGHTDSCEPENKRVA). Basic residues predominate over residues 307 to 321 (KPRKTHAAARLRRQK). 2 stretches are compositionally biased toward polar residues: residues 332-341 (EPGNSNNGSS) and 377-402 (RALT…QQTP). Residues 403 to 418 (SLDTDSSLTSDSSGSG) are compositionally biased toward low complexity. Residues 428–453 (TYTQCSTQPLSLPKQVTSACTDQPPA) show a composition bias toward polar residues. Phosphoserine is present on residues S494, S531, and S583. Positions 515-542 (RNYLHHPGPPNHGASASPFDMPNPTSEK) are disordered. 2 disordered regions span residues 631–650 (QHGD…GLES) and 657–678 (TGEE…SLES). Phosphoserine occurs at positions 670 and 697. The segment at 768-840 (APDGQLQLDP…KQDEDAGMKS (73 aa)) is disordered. Over residues 802-817 (PSDEEVINSSDEDDVS) the composition is skewed to acidic residues. Positions 821-838 (SKGEPDPLEDKQDEDAGM) are enriched in basic and acidic residues. The DH domain occupies 841-1030 (KVHHIAKEIM…IEVANHANDT (190 aa)). The PH 1 domain maps to 1059–1153 (VFLKEGTLMK…WLEAISSSIE (95 aa)). S1167 bears the Phosphoserine mark. The segment at 1191–1250 (DTRATMCMICTSEFTLTWRRHHCRACGKIVCQACSSNKYGLDYLKGQLARVCEHCFQELQ) adopts an FYVE-type zinc-finger fold. Zn(2+)-binding residues include C1197, C1200, C1213, C1216, C1221, C1224, C1242, and C1245. The PH 2 domain occupies 1302 to 1398 (DSTMSGYLYR…WIDAFQEGTV (97 aa)).

It localises to the cytoplasm. The protein localises to the cytoskeleton. Functionally, may activate CDC42, a member of the Ras-like family of Rho- and Rac proteins, by exchanging bound GDP for free GTP. May play a role in regulating the actin cytoskeleton and cell shape. This chain is FYVE, RhoGEF and PH domain-containing protein 6 (Fgd6), found in Mus musculus (Mouse).